A 1048-amino-acid chain; its full sequence is Anguibactin system regulator (1048 aa).

A Carrier domain is found at 965-1039 (PIITASEDRV…AFAIIMDRCR (75 aa)).

It belongs to the ATP-dependent AMP-binding enzyme family.

The protein operates within siderophore biosynthesis; anguibactin biosynthesis. Bifunctional protein that plays an essential role in virulence. Plays a role in both the production of the siderophore anguibactin and the regulation of iron transport genes. This chain is Anguibactin system regulator (angR), found in Vibrio anguillarum (Listonella anguillarum).